The chain runs to 481 residues: Argininosuccinate lyase (481 aa).

The span at 1–17 (MKNAPVDTQSDAATSFE) shows a compositional bias: polar residues. A disordered region spans residues 1 to 25 (MKNAPVDTQSDAATSFEGTAANPQW).

This sequence belongs to the lyase 1 family. Argininosuccinate lyase subfamily.

It localises to the cytoplasm. The enzyme catalyses 2-(N(omega)-L-arginino)succinate = fumarate + L-arginine. The protein operates within amino-acid biosynthesis; L-arginine biosynthesis; L-arginine from L-ornithine and carbamoyl phosphate: step 3/3. The polypeptide is Argininosuccinate lyase (Gluconobacter oxydans (strain 621H) (Gluconobacter suboxydans)).